The sequence spans 67 residues: Conotoxin Cl14.2b (67 aa).

The first 20 residues, 1–20 (MNVTVMFLVLLLLTMPLTDG), serve as a signal peptide directing secretion. Residues 21–48 (FNIRATNGGELFGPVQRDAGNVLDHGFQ) constitute a propeptide that is removed on maturation.

It belongs to the conotoxin L superfamily. Contains 2 disulfide bonds. In terms of tissue distribution, expressed by the venom duct.

Its subcellular location is the secreted. Functionally, increases calcium current amplitude through Cav1.2/Cav1.3 channels in rat pancreatic beta-cells, which is a prerequisite for eliciting insulin secretion. Stimulates insulin secretion in NIT-1 insulinoma cell lines. In vivo, significantly decreases mice blood glucose levels as of 45 minutes after treatment, similarly to insulin treatment. Has a potential therapeutic use in endocrinal pathologies such as early stages of type 2 diabetes where the pancreas's capability to produce insulin is still effective. The protein is Conotoxin Cl14.2b of Californiconus californicus (California cone).